The sequence spans 243 residues: Probable 2-phosphosulfolactate phosphatase (243 aa).

This sequence belongs to the ComB family. Mg(2+) serves as cofactor.

It catalyses the reaction (2R)-O-phospho-3-sulfolactate + H2O = (2R)-3-sulfolactate + phosphate. This Prochlorococcus marinus (strain MIT 9303) protein is Probable 2-phosphosulfolactate phosphatase.